Here is a 90-residue protein sequence, read N- to C-terminus: Probable Fe(2+)-trafficking protein (90 aa).

Belongs to the Fe(2+)-trafficking protein family.

Its function is as follows. Could be a mediator in iron transactions between iron acquisition and iron-requiring processes, such as synthesis and/or repair of Fe-S clusters in biosynthetic enzymes. The protein is Probable Fe(2+)-trafficking protein of Photobacterium profundum (strain SS9).